A 475-amino-acid chain; its full sequence is BTB/POZ domain-containing protein 10 (475 aa).

The disordered stretch occupies residues 1–143; the sequence is MAGRPHPYDG…SSQSSSDGSC (143 aa). A compositionally biased stretch (basic residues) spans 22–31; the sequence is LHSRPRKLYK. Basic and acidic residues predominate over residues 57–80; that stretch reads GHERSRDRRRSSDRSRDSSHERTE. Residues 81-94 are compositionally biased toward polar residues; it reads SQLTPCIRNVTSPT. Over residues 97 to 107 the composition is skewed to basic and acidic residues; that stretch reads HHVEREKDHSS. Over residues 108 to 142 the composition is skewed to low complexity; the sequence is SRPSSPRPQKASPNGSISSAGNSSRNSSQSSSDGS. The segment at 146 to 475 is interaction with AKT family members; the sequence is AGEMVFVYEN…LDPDAQNPML (330 aa). Positions 167–241 constitute a BTB domain; the sequence is ERVTLIVDNT…YKTGIIRCPD (75 aa). The segment at 455 to 475 is disordered; sequence LPIHPPSGNSDLDPDAQNPML.

In terms of assembly, interacts (via C-terminal 330-amino-acid region) with AKT1; AKT2 and AKT3. Interacts with PPP2CA and PPP1CA. In terms of tissue distribution, ubiquitously expressed. Highly expressed in adult brain, testis, aorta and small intestine and weakly expressed in the heart, lung, liver, kidney, pancreas, spleen, thymus, prostate, ovary and colon. Down-regulated in glioma.

The protein localises to the nucleus. It is found in the cytoplasm. Plays a major role as an activator of AKT family members by inhibiting PPP2CA-mediated dephosphorylation, thereby keeping AKTs activated. Plays a role in preventing motor neuronal death and accelerating the growth of pancreatic beta cells. This is BTB/POZ domain-containing protein 10 (BTBD10) from Homo sapiens (Human).